The sequence spans 430 residues: Enolase (430 aa).

Residue glutamine 165 coordinates (2R)-2-phosphoglycerate. Glutamate 207 (proton donor) is an active-site residue. Mg(2+) is bound by residues aspartate 244, glutamate 287, and aspartate 314. 4 residues coordinate (2R)-2-phosphoglycerate: lysine 339, arginine 368, serine 369, and lysine 390. Lysine 339 acts as the Proton acceptor in catalysis.

The protein belongs to the enolase family. Component of the RNA degradosome, a multiprotein complex involved in RNA processing and mRNA degradation. Requires Mg(2+) as cofactor.

Its subcellular location is the cytoplasm. The protein resides in the secreted. It localises to the cell surface. It carries out the reaction (2R)-2-phosphoglycerate = phosphoenolpyruvate + H2O. It functions in the pathway carbohydrate degradation; glycolysis; pyruvate from D-glyceraldehyde 3-phosphate: step 4/5. Catalyzes the reversible conversion of 2-phosphoglycerate (2-PG) into phosphoenolpyruvate (PEP). It is essential for the degradation of carbohydrates via glycolysis. This is Enolase from Xylella fastidiosa (strain M23).